Reading from the N-terminus, the 506-residue chain is Glutamate--tRNA ligase (506 aa).

The 'HIGH' region signature appears at Pro14 to Gly24. Residues Lys261–Arg265 carry the 'KMSKS' region motif. Lys264 serves as a coordination point for ATP.

The protein belongs to the class-I aminoacyl-tRNA synthetase family. Glutamate--tRNA ligase type 1 subfamily. In terms of assembly, monomer.

It localises to the cytoplasm. The catalysed reaction is tRNA(Glu) + L-glutamate + ATP = L-glutamyl-tRNA(Glu) + AMP + diphosphate. Its function is as follows. Catalyzes the attachment of glutamate to tRNA(Glu) in a two-step reaction: glutamate is first activated by ATP to form Glu-AMP and then transferred to the acceptor end of tRNA(Glu). The sequence is that of Glutamate--tRNA ligase from Roseiflexus sp. (strain RS-1).